Here is a 640-residue protein sequence, read N- to C-terminus: Probable potassium transport system protein Kup 2 (640 aa).

12 consecutive transmembrane segments (helical) span residues 19–39 (LFSSTTFLLALGSLGVVYGDI), 67–87 (VLSLVFWSMTMVICVKYVVFV), 118–138 (GVVAFAATLGASLLYGDGVIT), 155–175 (EAAKPLVVPLTCVVLLALFLV), 181–201 (GVIGNVFGPIMIVWFVTIAAL), 230–250 (FVGVVVLGSVVLCITGGEALY), 265–285 (WLGLAFPALLLNYFGQGALLL), 307–327 (MVCLSTIATVIASQAMISGVF), 355–375 (VYIPEVNYLLMIACLGLVLVF), 384–404 (AYGIAVTADMALTSILFFFVI), 415–435 (AVPLLVLFLFFDLSYFGANLF), and 437–457 (IFDGGWITLTIAAIVATSMIT).

The protein belongs to the HAK/KUP transporter (TC 2.A.72) family.

The protein localises to the cell inner membrane. The enzyme catalyses K(+)(in) + H(+)(in) = K(+)(out) + H(+)(out). Transport of potassium into the cell. Likely operates as a K(+):H(+) symporter. The sequence is that of Probable potassium transport system protein Kup 2 from Syntrophobacter fumaroxidans (strain DSM 10017 / MPOB).